Here is a 477-residue protein sequence, read N- to C-terminus: Ubiquinone biosynthesis monooxygenase COQ6, mitochondrial (477 aa).

A mitochondrion-targeting transit peptide spans Met1–Leu25.

It belongs to the UbiH/COQ6 family. As to quaternary structure, component of a multi-subunit COQ enzyme complex. FAD is required as a cofactor.

Its subcellular location is the mitochondrion inner membrane. The enzyme catalyses a 4-hydroxy-3-(all-trans-polyprenyl)benzoate + 2 reduced [2Fe-2S]-[ferredoxin] + O2 + 2 H(+) = a 3,4-dihydroxy-5-(all-trans-polyprenyl)benzoate + 2 oxidized [2Fe-2S]-[ferredoxin] + H2O. It carries out the reaction a 2-methoxy-6-(all-trans-polyprenyl)phenol + 2 reduced [2Fe-2S]-[ferredoxin] + O2 + 2 H(+) = a 2-methoxy-6-(all-trans-polyprenyl)benzene-1,4-diol + 2 oxidized [2Fe-2S]-[ferredoxin] + H2O. It participates in cofactor biosynthesis; ubiquinone biosynthesis. FAD-dependent monooxygenase required for two non-consecutive steps during ubiquinone biosynthesis. Required for the C5-ring hydroxylation during ubiquinone biosynthesis by catalyzing the hydroxylation of 4-hydroxy-3-(all-trans-polyprenyl)benzoic acid to 3,4-dihydroxy-5-(all-trans-polyprenyl)benzoic acid. Also acts downstream of coq4, for the C1-hydroxylation during ubiquinone biosynthesis by catalyzing the hydroxylation of 2-methoxy-6-(all-trans-polyprenyl)phenol to 2-methoxy-6-(all-trans-polyprenyl)benzene-1,4-diol. The electrons required for the hydroxylation reaction are funneled indirectly to Coq6 from NADPH via a ferredoxin/ferredoxin reductase system. This Drosophila melanogaster (Fruit fly) protein is Ubiquinone biosynthesis monooxygenase COQ6, mitochondrial.